The primary structure comprises 138 residues: Holo-[acyl-carrier-protein] synthase (138 aa).

The Mg(2+) site is built by Asp-8 and Glu-57.

It belongs to the P-Pant transferase superfamily. AcpS family. Requires Mg(2+) as cofactor.

The protein resides in the cytoplasm. The catalysed reaction is apo-[ACP] + CoA = holo-[ACP] + adenosine 3',5'-bisphosphate + H(+). Functionally, transfers the 4'-phosphopantetheine moiety from coenzyme A to a Ser of acyl-carrier-protein. The sequence is that of Holo-[acyl-carrier-protein] synthase from Phenylobacterium zucineum (strain HLK1).